The primary structure comprises 359 residues: MATH domain and coiled-coil domain-containing protein At2g42475 (359 aa).

An MATH domain is found at 6–128 (KTSFTFEIEN…NDKLIITVEV (123 aa)). The stretch at 146–337 (EFKELQDLYN…NLELMVLDFK (192 aa)) forms a coiled coil.

This Arabidopsis thaliana (Mouse-ear cress) protein is MATH domain and coiled-coil domain-containing protein At2g42475.